A 418-amino-acid polypeptide reads, in one-letter code: Ras association domain-containing protein 5 (418 aa).

The interval Met1–Glu118 is disordered. At Ala2 the chain carries N-acetylthreonine. A compositionally biased stretch (low complexity) spans Ser77 to Gln89. The segment at Gly122–Cys170 adopts a Phorbol-ester/DAG-type zinc-finger fold. 2 positions are modified to phosphoserine: Ser182 and Ser279. A Ras-associating domain is found at Thr274–Thr364. Position 352 is a phosphothreonine (Thr352). The SARAH domain occupies Glu366–Ser413.

Interacts directly with activated HRAS; a RASSF5-STK4/MST1 complex probably associates with activated HRAS. Interacts with KRAS. Probably interacts with Ras-like GTPases RRAS, MRAS, RAP1B, RAP2A and RALA. Interacts with RRAS2. Can self-associate. Interacts with RSSF1 isoform A. The RSSF1 isoform A-RSSF5 heterodimer probably mediates the association of RSSF1 with HRAS. Isoform 2 interacts with activated RAP1A and ITGAL/LFA-1. Binds STK4/MST1, inhibiting STK4/MST1 autoactivation. As to expression, widely expressed. Frequently down-regulated in lung tumor cell lines and primary lung tumors.

The protein localises to the cytoplasm. It localises to the cytoskeleton. Its function is as follows. Potential tumor suppressor. Seems to be involved in lymphocyte adhesion by linking RAP1A activation upon T-cell receptor or chemokine stimulation to integrin activation. Isoform 2 stimulates lymphocyte polarization and the patch-like distribution of ITGAL/LFA-1, resulting in an enhanced adhesion to ICAM1. Together with RAP1A may participate in regulation of microtubule growth. The association of isoform 2 with activated RAP1A is required for directional movement of endothelial cells during wound healing. May be involved in regulation of Ras apoptotic function. The RASSF5-STK4/MST1 complex may mediate HRAS and KRAS induced apoptosis. This is Ras association domain-containing protein 5 (RASSF5) from Homo sapiens (Human).